Consider the following 142-residue polypeptide: Large ribosomal subunit protein uL11 (142 aa).

This sequence belongs to the universal ribosomal protein uL11 family. In terms of assembly, part of the ribosomal stalk of the 50S ribosomal subunit. Interacts with L10 and the large rRNA to form the base of the stalk. L10 forms an elongated spine to which L12 dimers bind in a sequential fashion forming a multimeric L10(L12)X complex. Post-translationally, one or more lysine residues are methylated.

Functionally, forms part of the ribosomal stalk which helps the ribosome interact with GTP-bound translation factors. This Beijerinckia indica subsp. indica (strain ATCC 9039 / DSM 1715 / NCIMB 8712) protein is Large ribosomal subunit protein uL11.